The chain runs to 151 residues: Flagellar assembly factor FliW (151 aa).

Belongs to the FliW family. As to quaternary structure, interacts with translational regulator CsrA and flagellin(s).

It is found in the cytoplasm. In terms of biological role, acts as an anti-CsrA protein, binds CsrA and prevents it from repressing translation of its target genes, one of which is flagellin. Binds to flagellin and participates in the assembly of the flagellum. The chain is Flagellar assembly factor FliW from Natranaerobius thermophilus (strain ATCC BAA-1301 / DSM 18059 / JW/NM-WN-LF).